Consider the following 451-residue polypeptide: tRNA-2-methylthio-N(6)-dimethylallyladenosine synthase (451 aa).

In terms of domain architecture, MTTase N-terminal spans 6–122 (RHYHITTFGC…LQDLLEQVFN (117 aa)). Positions 15, 51, 85, 157, 161, and 164 each coordinate [4Fe-4S] cluster. The Radical SAM core domain occupies 143–380 (RDSKITAWVN…NHLVGVKAAD (238 aa)). Positions 383 to 447 (QRYMGRIEEV…PFSLTGEVKE (65 aa)) constitute a TRAM domain.

Belongs to the methylthiotransferase family. MiaB subfamily. Monomer. Requires [4Fe-4S] cluster as cofactor.

Its subcellular location is the cytoplasm. The enzyme catalyses N(6)-dimethylallyladenosine(37) in tRNA + (sulfur carrier)-SH + AH2 + 2 S-adenosyl-L-methionine = 2-methylsulfanyl-N(6)-dimethylallyladenosine(37) in tRNA + (sulfur carrier)-H + 5'-deoxyadenosine + L-methionine + A + S-adenosyl-L-homocysteine + 2 H(+). Functionally, catalyzes the methylthiolation of N6-(dimethylallyl)adenosine (i(6)A), leading to the formation of 2-methylthio-N6-(dimethylallyl)adenosine (ms(2)i(6)A) at position 37 in tRNAs that read codons beginning with uridine. This Trichodesmium erythraeum (strain IMS101) protein is tRNA-2-methylthio-N(6)-dimethylallyladenosine synthase.